The following is a 316-amino-acid chain: Prenytransferase adrG (316 aa).

7 helical membrane passes run 36-56 (LLGF…CASI), 60-80 (KIPI…SIFL), 131-151 (VLIY…FFAL), 163-183 (PQIT…SLGL), 191-211 (PTVC…VIYS), 247-267 (GFLA…VVSV), and 294-314 (KSAF…EYCL).

Belongs to the UbiA prenyltransferase family. It depends on Mg(2+) as a cofactor.

It is found in the membrane. It catalyses the reaction 3,5-dimethylorsellinate + (2E,6E)-farnesyl diphosphate = (3R)-3-farnesyl-6-hydroxy-2,3,5-trimethyl-4-oxocyclohexa-1,5-diene-1-carboxylate + diphosphate + H(+). Its pathway is secondary metabolite biosynthesis; terpenoid biosynthesis. In terms of biological role, prenytransferase; part of the gene cluster that mediates the biosynthesis of andrastins, meroterpenoid compounds that exhibit inhibitory activity against ras farnesyltransferase, suggesting that they could be promising leads for antitumor agents. The first step of the pathway is the synthesis of 3,5-dimethylorsellinic acid (DMOA) by the polyketide synthase adrD via condensation of one acetyl-CoA starter unit with 3 malonyl-CoA units and 2 methylations. DMAO is then converted to farnesyl-DMAO by the prenyltransferase adrG. The methyltransferase adrK catalyzes the methylation of the carboxyl group of farnesyl-DMAO to farnesyl-DMAO methyl ester which is further converted to epoxyfarnesyl-DMAO methyl ester by the FAD-dependent monooxygenase adrH. The terpene cyclase adrI then catalyzes the carbon skeletal rearrangement to generate the andrastin E, the first compound in the pathway having the andrastin scaffold, with the tetracyclic ring system. The post-cyclization tailoring enzymes adrF, adrE, adrJ, and adrA, are involved in the conversion of andrastin E into andrastin A. The short chain dehydrogenase adrF is responsible for the oxidation of the C-3 a hydroxyl group of andrastin E to yield the corresponding ketone, andrastin D. The ketoreductase adrE stereoselectively reduces the carbonyl moiety to reverse the stereochemistry of the C-3 position to yield andrastin F. The acetyltransferase adrJ is the acetyltransferase that attaches the acetyl group to the C-3 hydroxyl group of andrastin F to yield andrastin C. Finally, the cytochrome P450 monooxygenase adrA catalyzes two sequential oxidation reactions of the C-23 methyl group, to generate the corresponding alcohol andrastin B, and aldehyde andrastin A. The chain is Prenytransferase adrG from Penicillium roqueforti.